Consider the following 644-residue polypeptide: Coiled-coil domain-containing protein 22 homolog (644 aa).

The interval 316 to 341 (DEQKAAAMAGLSESGPPKMDTEEELQ) is disordered. Coiled coils occupy residues 333 to 383 (KMDT…NEQV), 409 to 486 (DAEN…GKDD), and 592 to 644 (GVIM…LKSS).

This sequence belongs to the CCDC22 family.

This chain is Coiled-coil domain-containing protein 22 homolog, found in Nematostella vectensis (Starlet sea anemone).